Here is a 386-residue protein sequence, read N- to C-terminus: Outer membrane protein assembly factor BamB (386 aa).

A signal peptide spans 1 to 25; that stretch reads MMRNSRPGRAWRGAVVLTGLLALSG. The N-palmitoyl cysteine moiety is linked to residue C26. A lipid anchor (S-diacylglycerol cysteine) is attached at C26.

The protein belongs to the BamB family. In terms of assembly, part of the Bam complex.

The protein resides in the cell outer membrane. Its function is as follows. Part of the outer membrane protein assembly complex, which is involved in assembly and insertion of beta-barrel proteins into the outer membrane. The protein is Outer membrane protein assembly factor BamB of Bordetella pertussis (strain Tohama I / ATCC BAA-589 / NCTC 13251).